Consider the following 149-residue polypeptide: Cytochrome c-556 (149 aa).

An N-terminal signal peptide occupies residues 1-20; that stretch reads MLRTVIVAGALVLTASAVMA. Positions 32, 137, 140, and 141 each coordinate heme c.

As to quaternary structure, monomer. Post-translationally, binds 1 heme c group covalently per subunit.

Its function is as follows. Low-spin monoheme cytochrome c. This is Cytochrome c-556 from Rhodopseudomonas palustris (strain ATCC BAA-98 / CGA009).